Consider the following 335-residue polypeptide: Histidinol-phosphate aminotransferase (335 aa).

K202 is subject to N6-(pyridoxal phosphate)lysine.

The protein belongs to the class-II pyridoxal-phosphate-dependent aminotransferase family. Histidinol-phosphate aminotransferase subfamily. As to quaternary structure, homodimer. It depends on pyridoxal 5'-phosphate as a cofactor.

It catalyses the reaction L-histidinol phosphate + 2-oxoglutarate = 3-(imidazol-4-yl)-2-oxopropyl phosphate + L-glutamate. It participates in amino-acid biosynthesis; L-histidine biosynthesis; L-histidine from 5-phospho-alpha-D-ribose 1-diphosphate: step 7/9. The sequence is that of Histidinol-phosphate aminotransferase from Thermotoga maritima (strain ATCC 43589 / DSM 3109 / JCM 10099 / NBRC 100826 / MSB8).